Reading from the N-terminus, the 998-residue chain is MKDSGDSKDQQLMVALRVRPISVAELEEGATLIAHKVDEQMVVLMDPMEDPDDILRAHRSREKSYLFDVAFDFTATQEMVYQATTKSLIEGVISGYNATVFAYGPTGCGKTYTMLGTDQEPGIYVQTLNDLFRAIEETSNDMEYEVSMSYLEIYNEMIRDLLNPSLGYLELREDSKGVIQVAGITEVSTINAKEIMQLLMKGNRQRTQEPTAANQTSSRSHAVLQVTVRQRSRVKNILQEVRQGRLFMIDLAGSERASQTQNRGQRMKEGAHINRSLLALGNCINALSDKGSNKYINYRDSKLTRLLKDSLGGNSRTVMIAHISPASSAFEESRNTLTYAGRAKNIKTRVKQNLLNVSYHIAQYTSIIADLRGEIQRLKRKIDEQTGRGQARGRQDRGDIRHIQAEVQLHSGQGEKAGMGQLREQLASAFQEQMDVRRRLLELENRAMEVQIDTSRHLLTIAGWKHEKSRRALKWREEQRKECYAKDDSEKDSDTGDDQPDILEPPEVAAARESIAALVDEQKQLRKQKLALEQRCRELRARGRRLEETLPRRIGSEEQREVLSLLCRVHELEVENTEMQSHALLRDGALRHRHEAVRRLEQHRSLCDEIIQGQRQIIDDYNLAVPQRLEELYEVYLRELEEGSLEQATIMDQVASRALQDSSLPKITPAGTSLTPDSDLESVKTLSSDAQHLQNSALPPLSTESEGHHVFKAGTGAWQAKSSSVPTPPPIQLGSLVTQEAPAQDSLGSWINSSPDSSENLSEIPLSHKERKEILTGTKCIWVKAARRRSRALGTEGRHLLAPATERSSLSLHSLSEGDDARPPGPLACKRPPSPTLQHAASEDNLSSSTGEAPSRAVGHHGDGPRPWLRGQKKSLGKKREESLEAKRRKRRSRSFEVTGQGLSHPKTHLLGPHQAERISDHRMPVCRHPAPGIRHLGKVTLPLAKVKLPPSQNTGPGDSSPLAVPPNPGGGSRRATRGPRLPHGTSTHGKDGCSRHN.

The Kinesin motor domain occupies 11–346; the sequence is QLMVALRVRP…LTYAGRAKNI (336 aa). 104-111 provides a ligand contact to ATP; sequence GPTGCGKT. Coiled coils occupy residues 360–391 and 424–452; these read HIAQ…RGQA and EQLA…EVQI. Over residues 482 to 494 the composition is skewed to basic and acidic residues; it reads ECYAKDDSEKDSD. Residues 482-503 form a disordered region; the sequence is ECYAKDDSEKDSDTGDDQPDIL. The stretch at 507–552 forms a coiled coil; it reads EVAAARESIAALVDEQKQLRKQKLALEQRCRELRARGRRLEETLPR. 4 stretches are compositionally biased toward polar residues: residues 662–676, 684–697, 746–761, and 836–852; these read SSLP…SLTP, KTLS…QNSA, SLGS…SENL, and TLQH…STGE. Disordered regions lie at residues 662–706, 746–765, 794–911, and 948–998; these read SSLP…TESE, SLGS…SEIP, GTEG…THLL, and KLPP…SRHN. Over residues 989–998 the composition is skewed to basic and acidic residues; it reads HGKDGCSRHN.

Belongs to the TRAFAC class myosin-kinesin ATPase superfamily. Kinesin family.

The protein resides in the cytoplasm. It is found in the cytoskeleton. Its subcellular location is the cell projection. The protein localises to the cilium. Plus end-directed microtubule-dependent motor protein that regulates the length of motile cilia by mediating depolymerization of microtubules at ciliary tips. This Homo sapiens (Human) protein is Kinesin-like protein KIF19 (KIF19).